Reading from the N-terminus, the 324-residue chain is Methionyl-tRNA formyltransferase (324 aa).

Residue 113-116 (SLLP) participates in (6S)-5,6,7,8-tetrahydrofolate binding.

The protein belongs to the Fmt family.

It carries out the reaction L-methionyl-tRNA(fMet) + (6R)-10-formyltetrahydrofolate = N-formyl-L-methionyl-tRNA(fMet) + (6S)-5,6,7,8-tetrahydrofolate + H(+). Functionally, attaches a formyl group to the free amino group of methionyl-tRNA(fMet). The formyl group appears to play a dual role in the initiator identity of N-formylmethionyl-tRNA by promoting its recognition by IF2 and preventing the misappropriation of this tRNA by the elongation apparatus. This chain is Methionyl-tRNA formyltransferase, found in Bacteroides fragilis (strain ATCC 25285 / DSM 2151 / CCUG 4856 / JCM 11019 / LMG 10263 / NCTC 9343 / Onslow / VPI 2553 / EN-2).